The chain runs to 522 residues: MSSITSRVSSRSSHELTEKKSGVTNDFKNSFEVGEVKRLPDAEGTADAVAQELLADDDFTYTAKEARRVLWKIDLVMMPVMCITYMIQYLDKTALSYAALYGMKTDTHIDGHTYSSMTTLFYAGYLVAQYPAAILMQKCRLSYFIFCNVFLWSAMVCLMAACRNGPSLLGLRFLAGIFEASITPAFINITAMWYRREEQPMRTLCWYAFNGIAQIIGSILSYGLGHIHGKVASWRYVFIVIGLMSLGWGVVFVFIPSNPSKARFLSSREKRIALERVRDNRTGLENKQFKWKHAYEAFLDPQVIMITLFTGVCMITNGIGVFSTLIIKGLGYNELHSAVLNMPLGAIEVAAMFISGVLCKVFKNGRLLIGVFMNCLTLAGCLMIWKIPDSNPYGRLVGVWFTMWVPASSALLLSLISSNVAGYTKKTVTSATVFVFYSVGNIVSPQLFKSGQTPEYIEGIQAMIVSLCIIIAIAFVLTGYYIYENKRRDRLLAEDPSLGESIKNEEFMDLTDRQQPKFRYRW.

The span at 1–11 (MSSITSRVSSR) shows a compositional bias: low complexity. Residues 1-20 (MSSITSRVSSRSSHELTEKK) form a disordered region. 12 helical membrane passes run 69 to 89 (VLWKIDLVMMPVMCITYMIQY), 116 to 136 (SMTTLFYAGYLVAQYPAAILM), 141 to 161 (LSYFIFCNVFLWSAMVCLMAA), 173 to 193 (FLAGIFEASITPAFINITAMW), 204 to 224 (LCWYAFNGIAQIIGSILSYGL), 236 to 256 (YVFIVIGLMSLGWGVVFVFIP), 303 to 323 (VIMITLFTGVCMITNGIGVFS), 338 to 358 (AVLNMPLGAIEVAAMFISGVL), 367 to 387 (LLIGVFMNCLTLAGCLMIWKI), 396 to 416 (LVGVWFTMWVPASSALLLSLI), 428 to 448 (VTSATVFVFYSVGNIVSPQLF), and 462 to 482 (AMIVSLCIIIAIAFVLTGYYI).

The protein belongs to the major facilitator superfamily. Allantoate permease family.

It is found in the endoplasmic reticulum. The protein localises to the membrane. This is an uncharacterized protein from Schizosaccharomyces pombe (strain 972 / ATCC 24843) (Fission yeast).